The following is a 507-amino-acid chain: Branchpoint-bridging protein (507 aa).

The segment covering 84-93 (DLNPPTSRYR) has biased composition (polar residues). Positions 84-110 (DLNPPTSRYRSLSPPPVYDSQGKRTNT) are disordered. Residues 154–220 (YIPINDYPEI…NMNEPLHCVI (67 aa)) form the KH domain. 2 CCHC-type zinc fingers span residues 272-289 (RPCP…ECSS) and 297-314 (VICQ…DCTS). The interval 307–507 (HAARDCTSPL…PPPPPPPPSS (201 aa)) is disordered. Residues 319 to 336 (FGKRTSDGPEFRETKKLQ) show a composition bias toward basic and acidic residues. Residues 345-376 (PVGSHPSAPGSGSANSGVAPASLHPPGTMAPP) are compositionally biased toward low complexity. 2 stretches are compositionally biased toward pro residues: residues 390–412 (TLPP…PVAL) and 440–449 (EGPPAPPQTA). Residues 450-469 (PPLRQTAATASSAGSSQSAQ) are compositionally biased toward low complexity. Pro residues predominate over residues 484-507 (PGPPAAVLPPPPPPPPPPPPPPSS).

The protein belongs to the BBP/SF1 family.

Its subcellular location is the nucleus. In terms of biological role, necessary for the splicing of pre-mRNA. Has a role in the recognition of the branch site (5'-UACUAAC-3'), the pyrimidine tract and the 3'-splice site at the 3'-end of introns. The sequence is that of Branchpoint-bridging protein (BBP) from Eremothecium gossypii (strain ATCC 10895 / CBS 109.51 / FGSC 9923 / NRRL Y-1056) (Yeast).